A 280-amino-acid polypeptide reads, in one-letter code: Four and a half LIM domains protein 3 (280 aa).

Position 2 is an N-acetylserine (Ser-2). Residues 7-31 (CAKCSESLYGRKYIQTDDGPYCVPC) form a C4-type zinc finger. 2 LIM zinc-binding domains span residues 40-92 (CAEC…CNDC) and 101-153 (CSAC…CVPC). Lys-157 bears the N6-acetyllysine mark. LIM zinc-binding domains follow at residues 162-212 (CARC…CVTC) and 221-275 (CSSC…CQGC). Lys-235 is modified (N6-acetyllysine).

As to quaternary structure, interacts with SOX15; the interaction recruits FHL3 to FOXK1 promoters where it acts as a transcriptional coactivator of FOXK1.

It localises to the nucleus. It is found in the cytoplasm. Its function is as follows. Recruited by SOX15 to FOXK1 promoters where it acts as a transcriptional coactivator of FOXK1. The sequence is that of Four and a half LIM domains protein 3 (FHL3) from Bos taurus (Bovine).